The following is a 1574-amino-acid chain: Synaptojanin-1 (1574 aa).

An SAC domain is found at 119 to 442 (VRKVLNSGNF…GDSISKIYAG (324 aa)). Phosphoserine is present on residues Ser-820 and Ser-830. The region spanning 894-971 (GTVLVSIKSS…RTITITLKSP (78 aa)) is the RRM domain. Over residues 1029–1054 (HLQPSSSSGLGTSPSSSPRTSPCQSP) the composition is skewed to low complexity. The segment at 1029–1327 (HLQPSSSSGL…GVKQEPTLKS (299 aa)) is disordered. A Phosphoserine modification is found at Ser-1053. The segment covering 1080-1100 (SSQGSPVDTQPAAQKDSSQTL) has biased composition (polar residues). Positions 1105-1127 (PPPPRPVAPPARPAPPQRPPPPS) are enriched in pro residues. A phosphoserine mark is found at Ser-1147 and Ser-1175. Residue Arg-1198 is modified to Omega-N-methylarginine. Thr-1217 bears the Phosphothreonine mark. The segment covering 1268-1287 (TMPPSGPQPNLETPPQPPPR) has biased composition (pro residues). The span at 1288-1307 (SRSSQSLPSDSSPQLQQEQP) shows a compositional bias: low complexity. 2 positions are modified to phosphoserine: Ser-1290 and Ser-1350. Thr-1354 is subject to Phosphothreonine. 2 disordered regions span residues 1363 to 1507 (LPSA…SVCP) and 1532 to 1574 (LPAR…FTER). Polar residues-rich tracts occupy residues 1364–1379 (PSAS…SVSC), 1393–1402 (QESMGSSANP), 1424–1436 (RVQS…TSWL), and 1472–1484 (DLQS…TSNP). A 3 X 3 AA repeats of N-P-F region spans residues 1403 to 1425 (FPSLPCRNPFTDRTAAPGNPFRV). The segment covering 1535 to 1548 (RRPPPPPPPVPLLP) has biased composition (pro residues). A compositionally biased stretch (low complexity) spans 1549-1563 (PGTTSSAGPSTTLPS). Over residues 1565–1574 (APSTLDFTER) the composition is skewed to polar residues.

It belongs to the synaptojanin family. The protein in the central section; belongs to the inositol 1,4,5-trisphosphate 5-phosphatase family. Interacts with ASH/GRB2. Interacts with PACSIN1, PACSIN2 and PACSIN3. Interacts with AMPH, SH3GL1, SH3GL2 and SH3GL3. Interacts with MYO1E (via SH3 domain). Interacts with BIN1 and DNM1. Interacts with EPS15.

Its subcellular location is the cytoplasm. It is found in the perinuclear region. It carries out the reaction a 1,2-diacyl-sn-glycero-3-phospho-(1D-myo-inositol-4,5-bisphosphate) + H2O = a 1,2-diacyl-sn-glycero-3-phospho-(1D-myo-inositol 4-phosphate) + phosphate. Its function is as follows. Phosphatase that acts on various phosphoinositides, including phosphatidylinositol 4-phosphate, phosphatidylinositol (4,5)-bisphosphate and phosphatidylinositol (3,4,5)-trisphosphate. Has a role in clathrin-mediated endocytosis. Hydrolyzes PIP2 bound to actin regulatory proteins resulting in the rearrangement of actin filaments downstream of tyrosine kinase and ASH/GRB2. The chain is Synaptojanin-1 (Synj1) from Mus musculus (Mouse).